The chain runs to 1254 residues: Structural polyprotein (1254 aa).

The host transcription inhibition stretch occupies residues 43–77; sequence LQAQQMQQLISAVSALTTKQNVKAPKGQRQKKQQK. Residues 60–113 form a disordered region; that stretch reads TKQNVKAPKGQRQKKQQKPKEKKENQKKKPTQKKKQQQKPKPQAKKKKPGRRER. A Nuclear localization signal motif is present at residues 70–108; sequence QRQKKQQKPKEKKENQKKKPTQKKKQQQKPKPQAKKKKP. Over residues 84 to 110 the composition is skewed to basic residues; the sequence is NQKKKPTQKKKQQQKPKPQAKKKKPGR. The binding to the viral RNA stretch occupies residues 95–123; sequence QQQKPKPQAKKKKPGRRERMCMKIENDCI. Positions 108 to 122 are ribosome-binding; it reads PGRRERMCMKIENDC. Cys122 and Cys137 are disulfide-bonded. The region spanning 122 to 270 is the Peptidase S3 domain; that stretch reads CIFEVKLDGK…RVTPEGTEEW (149 aa). The active-site Charge relay system is His148. Positions 153–163 match the Nuclear export signal motif; sequence IDNPDLAKLTY. The interaction with spike glycoprotein E2 stretch occupies residues 164 to 169; the sequence is KKSSKY. The active-site Charge relay system is Asp170. A dimerization of the capsid protein region spans residues 192-202; the sequence is PEGHYNWHHGA. Ser222 acts as the Charge relay system in catalysis. The segment at 228-232 is dimerization of the capsid protein; it reads DNKGR. Residues 271–282 are functions as an uncleaved signal peptide for the precursor of protein E3/E2; that stretch reads SAALMMCILANT. Residues 271–694 are Extracellular-facing; it reads SAALMMCILA…PHEIIQYYYG (424 aa). 3 disulfide bridges follow: Cys277-Cys286, Cys291-Cys295, and Cys294-Cys326. Asn281 carries an N-linked (GlcNAc...) asparagine; by host glycan. A glycan (N-linked (GlcNAc...) asparagine; by host) is linked at Asn328. Disulfide bonds link Cys353–Cys459, Cys356–Cys362, Cys425–Cys439, Cys487–Cys599, Cys535–Cys559, and Cys537–Cys554. Interaction with host Mxra8 receptor stretches follow at residues 360-363 and 396-398; these read YFCY and HAH. Residues 518-521 are interaction with host Mxra8 receptor; that stretch reads TAGN. Residue Asn534 is glycosylated (N-linked (GlcNAc...) asparagine; by host). The tract at residues 550-556 is interaction with host Mxra8 receptor; that stretch reads TINTCKI. Residue Asn596 is glycosylated (N-linked (GlcNAc...) asparagine; by host). The helical transmembrane segment at 695 to 715 threads the bilayer; that stretch reads LYPAATIAAVSGASLMALLTL. Residues 716–756 lie on the Cytoplasmic side of the membrane; the sequence is AATCCMLATARRKCLTPYALTPGAVVPLTLGLLCCAPRANA. A lipid anchor (S-palmitoyl cysteine; by host) is attached at Cys719. The tract at residues 724–728 is interaction with the capsid protein; the sequence is TARRK. Residues Cys729, Cys749, and Cys750 are each lipidated (S-palmitoyl cysteine; by host). The interval 729 to 749 is transient transmembrane before p62-6K protein processing; the sequence is CLTPYALTPGAVVPLTLGLLC. Cys729 and Cys750 are oxidised to a cystine. The Extracellular portion of the chain corresponds to 757-771; that stretch reads ASFAETMAYLWDENK. A helical membrane pass occupies residues 772–792; that stretch reads TLFWMEFAAPAAALALLACCI. Residue Lys793 is a topological domain, cytoplasmic. Residues 794–814 traverse the membrane as a helical segment; the sequence is SLICCCKPFSFLVLLSLGASA. The Extracellular segment spans residues 815–1231; it reads KAYEHTATIP…AMTWVQRLAS (417 aa). Disulfide bonds link Cys865–Cys930, Cys878–Cys910, Cys879–Cys912, and Cys884–Cys894. The tract at residues 900–917 is E1 fusion peptide loop; the sequence is VYPFMWGGAYCFCDSENT. Residue Asn957 is glycosylated (N-linked (GlcNAc...) asparagine; by host). 4 disulfides stabilise this stretch: Cys1075–Cys1087, Cys1117–Cys1192, Cys1122–Cys1196, and Cys1144–Cys1186. The helical transmembrane segment at 1232–1252 threads the bilayer; that stretch reads GLGGLALIAVVVLVLVTCITM. Cys1249 carries the S-palmitoyl cysteine; by host lipid modification. Cys1249 carries S-stearoyl cysteine; by host lipidation. Over 1253–1254 the chain is Cytoplasmic; that stretch reads RR.

In terms of assembly, homodimer. Homomultimer. Interacts with host karyopherin KPNA4; this interaction allows the nuclear import of the viral capsid protein. Interacts with spike glycoprotein E2. Interacts with host IRAK1; the interaction leads to inhibition of IRAK1-dependent signaling. The precursor of protein E3/E2 and E1 form a heterodimer shortly after synthesis. As to quaternary structure, interacts with spike glycoprotein E2. The precursor of protein E3/E2 and E1 form a heterodimer shortly after synthesis. Processing of the precursor of protein E3/E2 into E2 and E3 results in a heterodimer of the spike glycoproteins E2 and E1. Spike at virion surface are constituted of a trimer of E2-E1 heterodimers. After target cell attachment and endocytosis, E1 change conformation to form homotrimers. Interacts with 6K protein. E1/E2 heterodimer interacts with host LDLR. In terms of assembly, interacts with spike glycoprotein E1. Processing of the precursor of protein E3/E2 into E2 and E3 results in a heterodimer of the spike glycoproteins E2 and E1. Spike at virion surface are constituted of a trimer of E2-E1 heterodimers. Interacts with 6K protein. Interacts with host MXRA8; this interaction mediates virus entry. Oligomer. Interacts with spike glycoprotein E1. Interacts with spike glycoprotein E2. Post-translationally, structural polyprotein: Specific enzymatic cleavages in vivo yield mature proteins. Capsid protein is auto-cleaved during polyprotein translation, unmasking a signal peptide at the N-terminus of the precursor of E3/E2. The remaining polyprotein is then targeted to the host endoplasmic reticulum, where host signal peptidase cleaves it into pE2, 6K and E1 proteins. pE2 is further processed to mature E3 and E2 by host furin in trans-Golgi vesicle. Palmitoylated via thioester bonds. These palmitoylations may induce disruption of the C-terminus transmembrane. This would result in the reorientation of E2 C-terminus from lumenal to cytoplasmic side. In terms of processing, N-glycosylated. Post-translationally, palmitoylated via thioester bonds.

Its subcellular location is the virion. The protein resides in the host cytoplasm. It localises to the host cell membrane. The protein localises to the host nucleus. It is found in the virion membrane. Its subcellular location is the host Golgi apparatus. The protein resides in the host trans-Golgi network. It localises to the host endoplasmic reticulum. The enzyme catalyses Autocatalytic release of the core protein from the N-terminus of the togavirus structural polyprotein by hydrolysis of a -Trp-|-Ser- bond.. In terms of biological role, forms an icosahedral capsid with a T=4 symmetry composed of 240 copies of the capsid protein surrounded by a lipid membrane through which penetrate 80 spikes composed of trimers of E1-E2 heterodimers. The capsid protein binds to the viral RNA genome at a site adjacent to a ribosome binding site for viral genome translation following genome release. Possesses a protease activity that results in its autocatalytic cleavage from the nascent structural protein. Following its self-cleavage, the capsid protein transiently associates with ribosomes, and within several minutes the protein binds to viral RNA and rapidly assembles into icosahedric core particles. The resulting nucleocapsid eventually associates with the cytoplasmic domain of the spike glycoprotein E2 at the cell membrane, leading to budding and formation of mature virions. In case of infection, new virions attach to target cells and after clathrin-mediated endocytosis their membrane fuses with the host endosomal membrane. This leads to the release of the nucleocapsid into the cytoplasm, followed by an uncoating event necessary for the genomic RNA to become accessible. The uncoating might be triggered by the interaction of capsid proteins with ribosomes. Binding of ribosomes would release the genomic RNA since the same region is genomic RNA-binding and ribosome-binding. Specifically inhibits interleukin-1 receptor-associated kinase 1/IRAK1-dependent signaling during viral entry, representing a means by which the alphaviruses may evade innate immune detection and activation prior to viral gene expression. Functionally, provides the signal sequence for the translocation of the precursor of protein E3/E2 to the host endoplasmic reticulum. Furin-cleaved E3 remains associated with spike glycoprotein E1 and mediates pH protection of the latter during the transport via the secretory pathway. After virion release from the host cell, the assembly protein E3 is gradually released in the extracellular space. Plays a role in viral attachment to target host cell, by binding to the cell receptor MXRA8. The host LDLR may also act as a cell receptor for viral entry. Synthesized as a p62 precursor which is processed by furin at the cell membrane just before virion budding, giving rise to E2-E1 heterodimer. The p62-E1 heterodimer is stable, whereas E2-E1 is unstable and dissociate at low pH. p62 is processed at the last step, presumably to avoid E1 fusion activation before its final export to cell surface. E2 C-terminus contains a transitory transmembrane that would be disrupted by palmitoylation, resulting in reorientation of the C-terminal tail from lumenal to cytoplasmic side. This step is critical since E2 C-terminus is involved in budding by interacting with capsid proteins. This release of E2 C-terminus in cytoplasm occurs lately in protein export, and precludes premature assembly of particles at the endoplasmic reticulum membrane. Its function is as follows. Acts as a viroporin that participates in virus glycoprotein processing and transport to the plasma membrane, cell permeabilization and budding of viral particles. The cation channel is permeable to Na(+)&gt;K(+)&gt;Ca(2+) in vitro. Disrupts the calcium homeostasis of the cell, probably at the endoplasmic reticulum level. This leads to cytoplasmic calcium elevation. Because of its lipophilic properties, the 6K protein is postulated to influence the selection of lipids that interact with the transmembrane domains of the glycoproteins, which, in turn, affects the deformability of the bilayer required for the extreme curvature that occurs as budding proceeds. Present in low amount in virions, about 3% compared to viral glycoproteins. In terms of biological role, class II viral fusion protein. Fusion activity is inactive as long as E1 is bound to E2 in mature virion. After virus attachment to target cell via host MXRA8 and endocytosis, acidification of the endosome induce dissociation of E1/E2 heterodimer and concomitant trimerization of the E1 subunits. This E1 trimer is fusion active, and promotes release of viral nucleocapsid in cytoplasm after endosome and viral membrane fusion. Efficient fusion requires the presence of cholesterol and sphingolipid in the target membrane. The polypeptide is Structural polyprotein (Aedes (Common banded mosquito)).